A 289-amino-acid polypeptide reads, in one-letter code: MKLIILEHYSQASEWAAKYIRNRIIQFNPGPDKYFTMGLPTGSTPLGCYQKLIEYYKNGDLSFKYVKTFNMDEYVGLPREHPESYHSFMWNNFFKHIDIHPENTHILDGNAADLQAECDAFEEKIRAAGGIELFVGGIGPDGHVAFNEPGSSLVSRTRVKTLAMDTILANARFFDGDLAKVPTMALTVGVGTVMDAREVMILITGAHKAFALYKAIEEGVNHMWTVSAFQQHPRTVFVCDEDATLELKVKTVKYFKGLMLVHNKLVDPLYSIKEKEIQKSQAAKKPYSD.

Position 64 is an N6-acetyllysine (lysine 64). The active-site Proton acceptor; for enolization step is aspartate 72. Aspartate 141 (for ring-opening step) is an active-site residue. Histidine 143 functions as the Proton acceptor; for ring-opening step in the catalytic mechanism. The active-site For ring-opening step is the glutamate 148. The residue at position 161 (threonine 161) is a Phosphothreonine.

It belongs to the glucosamine/galactosamine-6-phosphate isomerase family. In terms of assembly, homohexamer. In terms of tissue distribution, at the equatorial segment of the sperm head.

The protein resides in the cytoplasm. The enzyme catalyses alpha-D-glucosamine 6-phosphate + H2O = beta-D-fructose 6-phosphate + NH4(+). It participates in nucleotide-sugar biosynthesis; UDP-N-acetyl-alpha-D-glucosamine biosynthesis; alpha-D-glucosamine 6-phosphate from D-fructose 6-phosphate: step 1/1. Allosterically activated by N-acetylglucosamine-6-phosphate (GlcNAc6P). In terms of biological role, catalyzes the reversible conversion of alpha-D-glucosamine 6-phosphate (GlcN-6P) into beta-D-fructose 6-phosphate (Fru-6P) and ammonium ion, a regulatory reaction step in de novo uridine diphosphate-N-acetyl-alpha-D-glucosamine (UDP-GlcNAc) biosynthesis via hexosamine pathway. Deamination is coupled to aldo-keto isomerization mediating the metabolic flux from UDP-GlcNAc toward Fru-6P. At high ammonium level can drive amination and isomerization of Fru-6P toward hexosamines and UDP-GlcNAc synthesis. Has a role in fine tuning the metabolic fluctuations of cytosolic UDP-GlcNAc and their effects on hyaluronan synthesis that occur during tissue remodeling. Seems to trigger calcium oscillations in mammalian eggs. These oscillations serve as the essential trigger for egg activation and early development of the embryo. The chain is Glucosamine-6-phosphate deaminase 1 from Mesocricetus auratus (Golden hamster).